Consider the following 1212-residue polypeptide: Histone demethylase UTY (1212 aa).

8 TPR repeats span residues 88–121, 125–158, 165–193, 200–233, 245–278, 279–312, 313–346, and 347–380; these read SDFF…QTDY, AAFL…DPNF, HLRL…IDCN, VEIQ…ESLP, GWMH…DPNS, GQSW…SEAS, ADTW…DHGH, and AAAW…KSCN. Over residues 530–539 the composition is skewed to basic and acidic residues; that stretch reads FTKESKDSRS. Residues 530–555 are disordered; it reads FTKESKDSRSKSLTSKTSRKDRDTSN. A Phosphothreonine modification is found at Thr752. A disordered region spans residues 865-886; it reads RRTQVKDYSDNESTCSDNSGRR. Positions 907-1070 constitute a JmjC domain; it reads KWKLQLHELT…YKLAVERYEW (164 aa). Positions 958, 960, and 1038 each coordinate Fe cation. Residues Cys1143, Cys1146, Cys1170, and Cys1173 each contribute to the Zn(2+) site.

The protein belongs to the UTX family. As to quaternary structure, binds TLE1 and TLE2. The cofactor is L-ascorbate. Fe(2+) is required as a cofactor.

The protein localises to the nucleus. It carries out the reaction N(6),N(6),N(6)-trimethyl-L-lysyl(27)-[histone H3] + 2 2-oxoglutarate + 2 O2 = N(6)-methyl-L-lysyl(27)-[histone H3] + 2 formaldehyde + 2 succinate + 2 CO2. Male-specific histone demethylase that catalyzes trimethylated 'Lys-27' (H3K27me3) demethylation in histone H3. Has relatively low KDM activity. This is Histone demethylase UTY (Uty) from Mus musculus (Mouse).